Here is a 197-residue protein sequence, read N- to C-terminus: Peptidyl-tRNA hydrolase (197 aa).

Y18 is a tRNA binding site. Residue H23 is the Proton acceptor of the active site. Y68, N70, and N116 together coordinate tRNA.

This sequence belongs to the PTH family. Monomer.

Its subcellular location is the cytoplasm. The catalysed reaction is an N-acyl-L-alpha-aminoacyl-tRNA + H2O = an N-acyl-L-amino acid + a tRNA + H(+). Its function is as follows. Hydrolyzes ribosome-free peptidyl-tRNAs (with 1 or more amino acids incorporated), which drop off the ribosome during protein synthesis, or as a result of ribosome stalling. Catalyzes the release of premature peptidyl moieties from peptidyl-tRNA molecules trapped in stalled 50S ribosomal subunits, and thus maintains levels of free tRNAs and 50S ribosomes. This is Peptidyl-tRNA hydrolase from Desulfotalea psychrophila (strain LSv54 / DSM 12343).